The primary structure comprises 338 residues: Holliday junction branch migration complex subunit RuvB (338 aa).

The interval 4–184 (SDRLVSGKAR…FGISHHLQYY (181 aa)) is large ATPase domain (RuvB-L). Residues arginine 24, glycine 65, lysine 68, threonine 69, threonine 70, 131-133 (EDY), arginine 174, tyrosine 184, and arginine 221 contribute to the ATP site. Mg(2+) is bound at residue threonine 69. Residues 185 to 255 (HHDELTQIVM…LADEALELLA (71 aa)) form a small ATPAse domain (RuvB-S) region. Positions 258–338 (HLGFDALDRR…NIEVPDGRNS (81 aa)) are head domain (RuvB-H). Residues arginine 294, arginine 313, and arginine 318 each coordinate DNA.

This sequence belongs to the RuvB family. In terms of assembly, homohexamer. Forms an RuvA(8)-RuvB(12)-Holliday junction (HJ) complex. HJ DNA is sandwiched between 2 RuvA tetramers; dsDNA enters through RuvA and exits via RuvB. An RuvB hexamer assembles on each DNA strand where it exits the tetramer. Each RuvB hexamer is contacted by two RuvA subunits (via domain III) on 2 adjacent RuvB subunits; this complex drives branch migration. In the full resolvosome a probable DNA-RuvA(4)-RuvB(12)-RuvC(2) complex forms which resolves the HJ.

It localises to the cytoplasm. The enzyme catalyses ATP + H2O = ADP + phosphate + H(+). In terms of biological role, the RuvA-RuvB-RuvC complex processes Holliday junction (HJ) DNA during genetic recombination and DNA repair, while the RuvA-RuvB complex plays an important role in the rescue of blocked DNA replication forks via replication fork reversal (RFR). RuvA specifically binds to HJ cruciform DNA, conferring on it an open structure. The RuvB hexamer acts as an ATP-dependent pump, pulling dsDNA into and through the RuvAB complex. RuvB forms 2 homohexamers on either side of HJ DNA bound by 1 or 2 RuvA tetramers; 4 subunits per hexamer contact DNA at a time. Coordinated motions by a converter formed by DNA-disengaged RuvB subunits stimulates ATP hydrolysis and nucleotide exchange. Immobilization of the converter enables RuvB to convert the ATP-contained energy into a lever motion, pulling 2 nucleotides of DNA out of the RuvA tetramer per ATP hydrolyzed, thus driving DNA branch migration. The RuvB motors rotate together with the DNA substrate, which together with the progressing nucleotide cycle form the mechanistic basis for DNA recombination by continuous HJ branch migration. Branch migration allows RuvC to scan DNA until it finds its consensus sequence, where it cleaves and resolves cruciform DNA. The protein is Holliday junction branch migration complex subunit RuvB of Dichelobacter nodosus (strain VCS1703A).